The chain runs to 191 residues: MTIKLIVGLGNPGKDYQSNRHNAGFWLCEALAHLYAGNFKKETKFFGEVAQINISGRKVRLLKPTVFMNCSGQSIQSIVNFYQINTNEILIVHDELDIDPGIAKIKFDGGHGGHNGLRDTIQTLGTKAFHRLRIGIGHPGDKSQVTNFVLHAPSKGELEKIQNSLNNSLQIIEDMINGNFDKAIKTLHTKE.

A tRNA-binding site is contributed by tyrosine 16. Histidine 21 functions as the Proton acceptor in the catalytic mechanism. Residues phenylalanine 67, asparagine 69, and asparagine 115 each contribute to the tRNA site.

Belongs to the PTH family. As to quaternary structure, monomer.

It localises to the cytoplasm. The catalysed reaction is an N-acyl-L-alpha-aminoacyl-tRNA + H2O = an N-acyl-L-amino acid + a tRNA + H(+). Functionally, hydrolyzes ribosome-free peptidyl-tRNAs (with 1 or more amino acids incorporated), which drop off the ribosome during protein synthesis, or as a result of ribosome stalling. Its function is as follows. Catalyzes the release of premature peptidyl moieties from peptidyl-tRNA molecules trapped in stalled 50S ribosomal subunits, and thus maintains levels of free tRNAs and 50S ribosomes. This chain is Peptidyl-tRNA hydrolase, found in Ruthia magnifica subsp. Calyptogena magnifica.